The sequence spans 420 residues: D-tagatose-1,6-bisphosphate aldolase subunit GatZ (420 aa).

Belongs to the GatZ/KbaZ family. GatZ subfamily. In terms of assembly, forms a complex with GatY.

The protein operates within carbohydrate metabolism; D-tagatose 6-phosphate degradation; D-glyceraldehyde 3-phosphate and glycerone phosphate from D-tagatose 6-phosphate: step 2/2. Functionally, component of the tagatose-1,6-bisphosphate aldolase GatYZ that is required for full activity and stability of the Y subunit. Could have a chaperone-like function for the proper and stable folding of GatY. When expressed alone, GatZ does not show any aldolase activity. Is involved in the catabolism of galactitol. This chain is D-tagatose-1,6-bisphosphate aldolase subunit GatZ, found in Escherichia coli (strain SMS-3-5 / SECEC).